We begin with the raw amino-acid sequence, 277 residues long: Shikimate dehydrogenase (NADP(+)) (277 aa).

Shikimate contacts are provided by residues 17 to 19 and Thr64; that span reads SRS. Lys68 (proton acceptor) is an active-site residue. The shikimate site is built by Asn88 and Asp103. Residues 128–132 and Leu217 contribute to the NADP(+) site; that span reads GAGGS. Tyr219 contributes to the shikimate binding site. Gly240 contributes to the NADP(+) binding site.

The protein belongs to the shikimate dehydrogenase family. As to quaternary structure, homodimer.

The enzyme catalyses shikimate + NADP(+) = 3-dehydroshikimate + NADPH + H(+). It participates in metabolic intermediate biosynthesis; chorismate biosynthesis; chorismate from D-erythrose 4-phosphate and phosphoenolpyruvate: step 4/7. Functionally, involved in the biosynthesis of the chorismate, which leads to the biosynthesis of aromatic amino acids. Catalyzes the reversible NADPH linked reduction of 3-dehydroshikimate (DHSA) to yield shikimate (SA). This chain is Shikimate dehydrogenase (NADP(+)), found in Afipia carboxidovorans (strain ATCC 49405 / DSM 1227 / KCTC 32145 / OM5) (Oligotropha carboxidovorans).